The chain runs to 115 residues: Large ribosomal subunit protein bL20 (115 aa).

It belongs to the bacterial ribosomal protein bL20 family.

Binds directly to 23S ribosomal RNA and is necessary for the in vitro assembly process of the 50S ribosomal subunit. It is not involved in the protein synthesizing functions of that subunit. In Borrelia hermsii (strain HS1 / DAH), this protein is Large ribosomal subunit protein bL20.